The primary structure comprises 153 residues: Nucleoside diphosphate kinase (153 aa).

The ATP site is built by lysine 13, phenylalanine 61, arginine 89, threonine 95, arginine 106, and asparagine 116. Threonine 95 is subject to Phosphothreonine. Histidine 119 functions as the Pros-phosphohistidine intermediate in the catalytic mechanism.

This sequence belongs to the NDK family. In terms of assembly, homohexamer and homotetramer. Interacts with TOM40 preferentially in an unfolded, unphosphorylated form. Mg(2+) is required as a cofactor. In terms of processing, the N-terminus is blocked.

Its subcellular location is the cytoplasm. The protein resides in the mitochondrion intermembrane space. It carries out the reaction a 2'-deoxyribonucleoside 5'-diphosphate + ATP = a 2'-deoxyribonucleoside 5'-triphosphate + ADP. The enzyme catalyses a ribonucleoside 5'-diphosphate + ATP = a ribonucleoside 5'-triphosphate + ADP. In terms of biological role, major role in the synthesis of nucleoside triphosphates other than ATP. The ATP gamma phosphate is transferred to the NDP beta phosphate via a ping-pong mechanism, using a phosphorylated active-site intermediate. Required for repair of UV radiation- and etoposide-induced DNA damage. The chain is Nucleoside diphosphate kinase (YNK1) from Saccharomyces cerevisiae (strain ATCC 204508 / S288c) (Baker's yeast).